A 207-amino-acid chain; its full sequence is Glycerol-3-phosphate acyltransferase (207 aa).

A run of 5 helical transmembrane segments spans residues 2 to 22 (ILVL…GVVI), 47 to 67 (MLGP…GTLA), 72 to 92 (ILFG…AVFG), 121 to 141 (FFVI…MVSV), and 155 to 175 (LVYH…VFLI).

Belongs to the PlsY family. In terms of assembly, probably interacts with PlsX.

It is found in the cell membrane. The enzyme catalyses an acyl phosphate + sn-glycerol 3-phosphate = a 1-acyl-sn-glycero-3-phosphate + phosphate. It functions in the pathway lipid metabolism; phospholipid metabolism. Its function is as follows. Catalyzes the transfer of an acyl group from acyl-phosphate (acyl-PO(4)) to glycerol-3-phosphate (G3P) to form lysophosphatidic acid (LPA). This enzyme utilizes acyl-phosphate as fatty acyl donor, but not acyl-CoA or acyl-ACP. The sequence is that of Glycerol-3-phosphate acyltransferase from Lacticaseibacillus casei (strain BL23) (Lactobacillus casei).